The sequence spans 210 residues: Ribosomal RNA large subunit methyltransferase E (210 aa).

S-adenosyl-L-methionine-binding residues include Gly-60, Trp-62, Asp-80, Asp-96, and Asp-121. The active-site Proton acceptor is Lys-161.

The protein belongs to the class I-like SAM-binding methyltransferase superfamily. RNA methyltransferase RlmE family.

It is found in the cytoplasm. The enzyme catalyses uridine(2552) in 23S rRNA + S-adenosyl-L-methionine = 2'-O-methyluridine(2552) in 23S rRNA + S-adenosyl-L-homocysteine + H(+). Specifically methylates the uridine in position 2552 of 23S rRNA at the 2'-O position of the ribose in the fully assembled 50S ribosomal subunit. The chain is Ribosomal RNA large subunit methyltransferase E from Vesicomyosocius okutanii subsp. Calyptogena okutanii (strain HA).